The chain runs to 117 residues: Hydrogenase maturation factor HypA (117 aa).

Histidine 2 contributes to the Ni(2+) binding site. 4 residues coordinate Zn(2+): cysteine 73, cysteine 76, cysteine 89, and cysteine 92.

This sequence belongs to the HypA/HybF family.

Involved in the maturation of [NiFe] hydrogenases. Required for nickel insertion into the metal center of the hydrogenase. This Shewanella baltica (strain OS185) protein is Hydrogenase maturation factor HypA.